We begin with the raw amino-acid sequence, 233 residues long: UPF0725 protein At4g17990 (233 aa).

This sequence belongs to the UPF0725 (EMB2204) family.

The protein is UPF0725 protein At4g17990 of Arabidopsis thaliana (Mouse-ear cress).